A 207-amino-acid polypeptide reads, in one-letter code: ATP synthase subunit 5, mitochondrial (207 aa).

It belongs to the ATPase delta chain family. In terms of assembly, F-type ATPases have 2 components, CF(1) - the catalytic core - and CF(0) - the membrane proton channel. CF(1) has five subunits: alpha(3), beta(3), gamma(1), delta(1), epsilon(1). CF(0) has three main subunits: a, b and c.

It is found in the mitochondrion. Its subcellular location is the mitochondrion inner membrane. Its function is as follows. Mitochondrial membrane ATP synthase (F(1)F(0) ATP synthase or Complex V) produces ATP from ADP in the presence of a proton gradient across the membrane which is generated by electron transport complexes of the respiratory chain. F-type ATPases consist of two structural domains, F(1) - containing the extramembraneous catalytic core and F(0) - containing the membrane proton channel, linked together by a central stalk and a peripheral stalk. During catalysis, ATP synthesis in the catalytic domain of F(1) is coupled via a rotary mechanism of the central stalk subunits to proton translocation. Part of the complex F(0) domain and the peripheric stalk, which acts as a stator to hold the catalytic alpha(3)beta(3) subcomplex and subunit a/ATP6 static relative to the rotary elements. In Candida glabrata (strain ATCC 2001 / BCRC 20586 / JCM 3761 / NBRC 0622 / NRRL Y-65 / CBS 138) (Yeast), this protein is ATP synthase subunit 5, mitochondrial (ATP5).